The primary structure comprises 442 residues: MSTRSKSVPVPAGGGAATVPLAVLLRREVVSEKTAAERPELQVGLFSQAKKGEDYTFLKPDCERLPGVPSSSFSAFGLFDGHNGNGAAIYTKENLLSNILTAIPADLNREDWLAALPRAMVAAFVKTDKDFQTKARSSGTTVTFVIIDGLFITVASVGDSRCVLEAEGSIYHLSADHRFDASKEEVDRVTESGGDVGRLNVVGGAEIGPLRCWPGGLCLSRSIGDQDVGQFIVPVPYVKQVKLSTAGGRLIISSDGVWDVLTAEVAFNCSRTLPPEAAAEQIVKEAVQQKGLRDDTTCIVVDILPDKANLTMPHTKKQPGMGVFKNMFRKKTPSDSSSHTDREYMDPDIVEEIFEDGCAFLSKRLDSEYPVRNMFKLFICAICQVELKPSQGISVHEDSSQPGNLRRWDGPFLCQGCQEKKEAMEGKRRSRDSSSRNSGSSE.

The region spanning A35–I303 is the PPM-type phosphatase domain. Mn(2+)-binding residues include D80, G81, D255, and D294. A compositionally biased stretch (basic and acidic residues) spans K420–S434. The interval K420–E442 is disordered.

Belongs to the PP2C family. Mg(2+) is required as a cofactor. Mn(2+) serves as cofactor.

It carries out the reaction O-phospho-L-seryl-[protein] + H2O = L-seryl-[protein] + phosphate. The catalysed reaction is O-phospho-L-threonyl-[protein] + H2O = L-threonyl-[protein] + phosphate. In Oryza sativa subsp. japonica (Rice), this protein is Probable protein phosphatase 2C 15.